The sequence spans 558 residues: Factor VII-activating protease (558 aa).

The signal sequence occupies residues 1-23 (MSVVMLVFRVLLLIALVGNSAIG). 3 consecutive EGF-like domains span residues 71-107 (DDDP…SRCQ), 109-146 (VQNK…PDCS), and 148-186 (VLPV…RFCE). 18 disulfides stabilise this stretch: Cys-75–Cys-86, Cys-80–Cys-95, Cys-97–Cys-106, Cys-113–Cys-123, Cys-118–Cys-134, Cys-136–Cys-145, Cys-152–Cys-163, Cys-157–Cys-174, Cys-176–Cys-185, Cys-192–Cys-274, Cys-213–Cys-255, Cys-244–Cys-269, Cys-299–Cys-433, Cys-345–Cys-361, Cys-353–Cys-422, Cys-445–Cys-513, Cys-475–Cys-491, and Cys-503–Cys-531. One can recognise a Kringle domain in the interval 191–274 (DCYVGDGYSY…KWEYCNVEVC (84 aa)). A Peptidase S1 domain is found at 312–553 (IYGGFKSTAG…FLNWIKTTMH (242 aa)). Catalysis depends on charge relay system residues His-360 and Asp-409. The active-site Charge relay system is the Ser-507.

It belongs to the peptidase S1 family. In terms of assembly, heterodimer; disulfide-linked. Heterodimer of a 50 kDa heavy and a 27 kDa light chain linked by a disulfide bond. Post-translationally, proteolytic cleavage at Gly-23 or Met-27 can give rise to the 50 kDa heavy chain (HC) and cleavage at Arg-311 or Lys-317 can give rise to the 27 kDa light chain (LC). The HC can undergo further proteolytic cleavage giving rise to a 26 kDa fragment. The LC can undergo further proteolytic cleavage at Arg-311 leading to a 17-kDa fragment and at Arg-478 leading to a 8-kDa fragment.

The protein resides in the secreted. Cleaves the alpha-chain at multiple sites and the beta-chain between 'Lys-53' and 'Lys-54' but not the gamma-chain of fibrinogen and therefore does not initiate the formation of the fibrin clot and does not cause the fibrinolysis directly. It does not cleave (activate) prothrombin and plasminogen but converts the inactive single chain urinary plasminogen activator (pro-urokinase) to the active two chain form. Activates coagulation factor VII. May function as a tumor suppressor negatively regulating cell proliferation and cell migration. In Rattus norvegicus (Rat), this protein is Factor VII-activating protease.